The following is a 260-amino-acid chain: uncharacterized protein (260 aa).

Belongs to the methyltransferase superfamily.

Its subcellular location is the cytoplasm. It is found in the nucleus. In terms of biological role, probable methyltransferase. This is an uncharacterized protein from Schizosaccharomyces pombe (strain 972 / ATCC 24843) (Fission yeast).